The chain runs to 261 residues: Cytochrome c oxidase subunit 3 (261 aa).

The Mitochondrial matrix portion of the chain corresponds to 1–15 (MTHQTHAYHMVNPSP). The chain crosses the membrane as a helical span at residues 16–34 (WPLTGALSALLMTSGLTMW). Topologically, residues 35–40 (FHFNSM) are mitochondrial intermembrane. Residues 41 to 66 (LLLSLGLLTNTLTMYQWWRDIIREST) form a helical membrane-spanning segment. Residues 67-72 (FQGHHT) are Mitochondrial matrix-facing. The helical transmembrane segment at 73–105 (SVVQKGLRYGMILFIISEVLFFTGFFWAFYHSS) threads the bilayer. Residues 106 to 128 (LAPTPELGGCWPPTGIHPLNPLE) are Mitochondrial intermembrane-facing. A helical membrane pass occupies residues 129–152 (VPLLNTSILLASGVSITWAHHSLM). Residues 153–155 (EGD) lie on the Mitochondrial matrix side of the membrane. A helical membrane pass occupies residues 156 to 183 (RKHMIQALSITIALGVYFTLLQASEYYE). Residues 184-190 (APFTISD) are Mitochondrial intermembrane-facing. A helical membrane pass occupies residues 191–223 (GVYGSTFFVATGFHGLHVIIGSTFLAVCLLRQL). Over 224-232 (KFHFTSNHH) the chain is Mitochondrial matrix. The chain crosses the membrane as a helical span at residues 233-256 (FGFEAAAWYWHFVDVVWLFLYVSI). At 257 to 261 (YWWGS) the chain is on the mitochondrial intermembrane side.

The protein belongs to the cytochrome c oxidase subunit 3 family. Component of the cytochrome c oxidase (complex IV, CIV), a multisubunit enzyme composed of 14 subunits. The complex is composed of a catalytic core of 3 subunits MT-CO1, MT-CO2 and MT-CO3, encoded in the mitochondrial DNA, and 11 supernumerary subunits COX4I, COX5A, COX5B, COX6A, COX6B, COX6C, COX7A, COX7B, COX7C, COX8 and NDUFA4, which are encoded in the nuclear genome. The complex exists as a monomer or a dimer and forms supercomplexes (SCs) in the inner mitochondrial membrane with NADH-ubiquinone oxidoreductase (complex I, CI) and ubiquinol-cytochrome c oxidoreductase (cytochrome b-c1 complex, complex III, CIII), resulting in different assemblies (supercomplex SCI(1)III(2)IV(1) and megacomplex MCI(2)III(2)IV(2)).

The protein localises to the mitochondrion inner membrane. The catalysed reaction is 4 Fe(II)-[cytochrome c] + O2 + 8 H(+)(in) = 4 Fe(III)-[cytochrome c] + 2 H2O + 4 H(+)(out). Component of the cytochrome c oxidase, the last enzyme in the mitochondrial electron transport chain which drives oxidative phosphorylation. The respiratory chain contains 3 multisubunit complexes succinate dehydrogenase (complex II, CII), ubiquinol-cytochrome c oxidoreductase (cytochrome b-c1 complex, complex III, CIII) and cytochrome c oxidase (complex IV, CIV), that cooperate to transfer electrons derived from NADH and succinate to molecular oxygen, creating an electrochemical gradient over the inner membrane that drives transmembrane transport and the ATP synthase. Cytochrome c oxidase is the component of the respiratory chain that catalyzes the reduction of oxygen to water. Electrons originating from reduced cytochrome c in the intermembrane space (IMS) are transferred via the dinuclear copper A center (CU(A)) of subunit 2 and heme A of subunit 1 to the active site in subunit 1, a binuclear center (BNC) formed by heme A3 and copper B (CU(B)). The BNC reduces molecular oxygen to 2 water molecules using 4 electrons from cytochrome c in the IMS and 4 protons from the mitochondrial matrix. This is Cytochrome c oxidase subunit 3 (MT-CO3) from Sus scrofa (Pig).